We begin with the raw amino-acid sequence, 218 residues long: Uracil-DNA glycosylase (218 aa).

The active-site Proton acceptor is aspartate 59.

It belongs to the uracil-DNA glycosylase (UDG) superfamily. UNG family.

It localises to the cytoplasm. It catalyses the reaction Hydrolyzes single-stranded DNA or mismatched double-stranded DNA and polynucleotides, releasing free uracil.. Its function is as follows. Excises uracil residues from the DNA which can arise as a result of misincorporation of dUMP residues by DNA polymerase or due to deamination of cytosine. The sequence is that of Uracil-DNA glycosylase from Staphylococcus saprophyticus subsp. saprophyticus (strain ATCC 15305 / DSM 20229 / NCIMB 8711 / NCTC 7292 / S-41).